Reading from the N-terminus, the 715-residue chain is Phosphoribosylformylglycinamidine synthase subunit PurL (715 aa).

His33 is an active-site residue. Tyr36 lines the ATP pocket. Glu77 contributes to the Mg(2+) binding site. Substrate-binding positions include 78–81 (SHNH) and Arg100. His79 serves as the catalytic Proton acceptor. Asp101 contributes to the Mg(2+) binding site. Gln225 provides a ligand contact to substrate. Asp253 contacts Mg(2+). Substrate is bound at residue 297-299 (ESQ). Asn475 and Gly512 together coordinate ATP. Asn513 is a Mg(2+) binding site. A substrate-binding site is contributed by Ser515.

Belongs to the FGAMS family. In terms of assembly, monomer. Part of the FGAM synthase complex composed of 1 PurL, 1 PurQ and 2 PurS subunits.

It is found in the cytoplasm. The catalysed reaction is N(2)-formyl-N(1)-(5-phospho-beta-D-ribosyl)glycinamide + L-glutamine + ATP + H2O = 2-formamido-N(1)-(5-O-phospho-beta-D-ribosyl)acetamidine + L-glutamate + ADP + phosphate + H(+). Its pathway is purine metabolism; IMP biosynthesis via de novo pathway; 5-amino-1-(5-phospho-D-ribosyl)imidazole from N(2)-formyl-N(1)-(5-phospho-D-ribosyl)glycinamide: step 1/2. In terms of biological role, part of the phosphoribosylformylglycinamidine synthase complex involved in the purines biosynthetic pathway. Catalyzes the ATP-dependent conversion of formylglycinamide ribonucleotide (FGAR) and glutamine to yield formylglycinamidine ribonucleotide (FGAM) and glutamate. The FGAM synthase complex is composed of three subunits. PurQ produces an ammonia molecule by converting glutamine to glutamate. PurL transfers the ammonia molecule to FGAR to form FGAM in an ATP-dependent manner. PurS interacts with PurQ and PurL and is thought to assist in the transfer of the ammonia molecule from PurQ to PurL. This chain is Phosphoribosylformylglycinamidine synthase subunit PurL, found in Methanosarcina acetivorans (strain ATCC 35395 / DSM 2834 / JCM 12185 / C2A).